We begin with the raw amino-acid sequence, 406 residues long: Succinylornithine transaminase (406 aa).

Lysine 252 carries the post-translational modification N6-(pyridoxal phosphate)lysine.

Belongs to the class-III pyridoxal-phosphate-dependent aminotransferase family. AstC subfamily. Pyridoxal 5'-phosphate serves as cofactor.

It catalyses the reaction N(2)-succinyl-L-ornithine + 2-oxoglutarate = N-succinyl-L-glutamate 5-semialdehyde + L-glutamate. It participates in amino-acid degradation; L-arginine degradation via AST pathway; L-glutamate and succinate from L-arginine: step 3/5. Catalyzes the transamination of N(2)-succinylornithine and alpha-ketoglutarate into N(2)-succinylglutamate semialdehyde and glutamate. Can also act as an acetylornithine aminotransferase. The sequence is that of Succinylornithine transaminase from Escherichia coli O45:K1 (strain S88 / ExPEC).